The following is a 693-amino-acid chain: Glycine--tRNA ligase beta subunit (693 aa).

This sequence belongs to the class-II aminoacyl-tRNA synthetase family. In terms of assembly, tetramer of two alpha and two beta subunits.

It localises to the cytoplasm. It catalyses the reaction tRNA(Gly) + glycine + ATP = glycyl-tRNA(Gly) + AMP + diphosphate. In Natranaerobius thermophilus (strain ATCC BAA-1301 / DSM 18059 / JW/NM-WN-LF), this protein is Glycine--tRNA ligase beta subunit.